The following is a 284-amino-acid chain: uncharacterized protein (284 aa).

Transmembrane regions (helical) follow at residues 174 to 194 (LFVLIVMFTTVHRVQCIYISI), 217 to 237 (MLIPGPGVAHTYIYVAGPGTA), and 241 to 261 (LIVLLLLLLCIVVAVNTSGSC).

It localises to the membrane. This is an uncharacterized protein from Saccharomyces cerevisiae (strain ATCC 204508 / S288c) (Baker's yeast).